The chain runs to 125 residues: Large ribosomal subunit protein bL12 (125 aa).

The protein belongs to the bacterial ribosomal protein bL12 family. In terms of assembly, homodimer. Part of the ribosomal stalk of the 50S ribosomal subunit. Forms a multimeric L10(L12)X complex, where L10 forms an elongated spine to which 2 to 4 L12 dimers bind in a sequential fashion. Binds GTP-bound translation factors.

In terms of biological role, forms part of the ribosomal stalk which helps the ribosome interact with GTP-bound translation factors. Is thus essential for accurate translation. In Methylobacterium radiotolerans (strain ATCC 27329 / DSM 1819 / JCM 2831 / NBRC 15690 / NCIMB 10815 / 0-1), this protein is Large ribosomal subunit protein bL12.